We begin with the raw amino-acid sequence, 507 residues long: Acetylcholine receptor subunit beta-type lev-1 (507 aa).

The N-terminal stretch at 1–31 (MMLGGGGGCGAGGTWLGFLVFLAVSLRNHST) is a signal peptide. Asn28, Asn58, and Asn109 each carry an N-linked (GlcNAc...) asparagine glycan. Residues 32-138 (CEDIDAEDRL…NNADGNYEVS (107 aa)) lie on the Extracellular side of the membrane. The chain crosses the membrane as a helical span at residues 139 to 159 (FMCNVLILSTGTVLWVPPAIY). Cys163 and Cys177 are joined by a disulfide. A run of 3 helical transmembrane segments spans residues 243–263 (VVLI…FYLP), 271–291 (GLTM…SKIL), and 305–325 (LLLT…ICNI). A disordered region spans residues 373 to 392 (GPSVEENPMRSGEHHPLCRH). Residues 379–392 (NPMRSGEHHPLCRH) are compositionally biased toward basic and acidic residues. The helical transmembrane segment at 454 to 474 (FLLYGFFGATVGGTIGIIFTA) threads the bilayer.

It belongs to the ligand-gated ion channel (TC 1.A.9) family. Acetylcholine receptor (TC 1.A.9.1) subfamily. As to quaternary structure, interacts with unc-29. Component of nicotinic acetylcholine receptor composed of 2 non-alpha subunits lev-1 and unc-29, and 3 alpha subunits unc-38, unc-63 and lev-8.

Its subcellular location is the postsynaptic cell membrane. It is found in the cell membrane. In terms of biological role, non-alpha subunit of nicotinic acetylcholine receptor (nAChR). Involved in nAChR sensitivity to nicotine. This Caenorhabditis elegans protein is Acetylcholine receptor subunit beta-type lev-1 (lev-1).